The sequence spans 1091 residues: Sodium/potassium exporting P-type ATPase 2 (1091 aa).

Over 1–63 (MSEGTVKENN…LGDDTKIDYK (63 aa)) the chain is Cytoplasmic. Residues 64 to 84 (AMVLHQVCNAMIMVLVISMAI) traverse the membrane as a helical segment. Residues 85-90 (SFAVRD) lie on the Extracellular side of the membrane. A helical transmembrane segment spans residues 91 to 111 (WITGGVISFVIAVNVLIGLVQ). Over 112 to 282 (EYKATKTMNS…TNVGTPLHRK (171 aa)) the chain is Cytoplasmic. A helical membrane pass occupies residues 283–303 (LSKLAVLLFWIAVLFAIIVMA). The Extracellular segment spans residues 304–312 (SQKFDVDKR). A helical membrane pass occupies residues 313–333 (VAIYAICVALSMIPSSLVVVL). The Cytoplasmic portion of the chain corresponds to 334 to 815 (TITMSVGAAV…RRMTDNIQKF (482 aa)). Asp-369 functions as the 4-aspartylphosphate intermediate in the catalytic mechanism. Residues Asp-369 and Thr-371 each contribute to the Mg(2+) site. The ATP site is built by Thr-371 and Glu-483. The disordered stretch occupies residues 499 to 525 (ALTGEKSTNQSNENDQSSLSQHNEKPG). The span at 503–519 (EKSTNQSNENDQSSLSQ) shows a compositional bias: polar residues. The ATP site is built by Lys-561, Arg-606, Thr-673, Gly-674, Asp-675, Arg-732, and Lys-738. Asp-757 provides a ligand contact to Mg(2+). Residue Asn-760 coordinates ATP. A helical transmembrane segment spans residues 816-836 (VLQLLAENVAQALYLIIGLVF). Residues 837–848 (RDENGKSVFPLS) are Extracellular-facing. A helical transmembrane segment spans residues 849–869 (PVEVLWIIVVTSCFPAMGLGL). Topologically, residues 870-885 (EKAAPDLMDRPPHDSE) are cytoplasmic. Residues 886 to 906 (VGIFTWEVIIDTFAYGIIMTG) traverse the membrane as a helical segment. At 907-943 (SCMASFTGSLYGINSGRLGHDCDGTYNSSCRDVYRSR) the chain is on the extracellular side. Residues 944–964 (SAAFATMTWCALILAWEVVDM) form a helical membrane-spanning segment. Residues 965-991 (RRSFFRMHPDTDSPVKEFFRSIWGNQF) are Cytoplasmic-facing. Residues 992–1012 (LFWSIIFGFVSAFPVVYIPVI) traverse the membrane as a helical segment. Topologically, residues 1013–1021 (NDKVFLHKP) are extracellular. Residues 1022–1042 (IGAEWGLAIAFTIAFWIGAEL) traverse the membrane as a helical segment. At 1043–1091 (YKCGKRRYFKTQRAHNPENDLESNNKRDPFEAYSTSTTIHTEVNIGIKQ) the chain is on the cytoplasmic side.

It belongs to the cation transport ATPase (P-type) (TC 3.A.3) family. Type IID subfamily. It depends on Mg(2+) as a cofactor. Post-translationally, the active site is phosphorylated in presence of sodium or potassium and in conditions of higher pH. Not phosphorylated in presence of calcium ions.

The protein resides in the cell membrane. It carries out the reaction Na(+)(in) + ATP + H2O = Na(+)(out) + ADP + phosphate + H(+). The catalysed reaction is K(+)(in) + ATP + H2O = K(+)(out) + ADP + phosphate + H(+). In terms of biological role, catalyzes the hydrolysis of ATP coupled with the export of sodium and potassium from the cell. May export potassium less efficiently. May transport other cations such as lithium. Sodium/potassium efflux ATPases are involved in salt tolerance and maintaining the membrane potential across the plasma membrane in high salinity (Na+) or alkaline (K+) environments. This Saccharomyces cerevisiae (strain ATCC 204508 / S288c) (Baker's yeast) protein is Sodium/potassium exporting P-type ATPase 2.